Here is a 1053-residue protein sequence, read N- to C-terminus: Zinc finger and BTB domain-containing protein 11 (1053 aa).

Positions 141–156 (LDLESGEESNESEDDL) are enriched in acidic residues. A disordered region spans residues 141 to 173 (LDLESGEESNESEDDLSNFTSSPTTASKPAKKK). Residues 157–168 (SNFTSSPTTASK) show a composition bias toward low complexity. One can recognise a BTB domain in the interval 214-282 (CDVTLLIEGE…AYTSVLSFDF (69 aa)). Positions 546-566 (LVQRGKKMKQPKRDAKENTEE) are disordered. Residues 556–566 (PKRDAKENTEE) show a composition bias toward basic and acidic residues. 2 consecutive C2H2-type zinc fingers follow at residues 569–591 (HKCGECGMVFQRRYALIMHKLKH) and 597–619 (YKCPLCKKQFQYSASLRAHLIRH). Residues 619 to 643 (HTRKDAPSSSSSNSTSNEASGTSSE) are disordered. Positions 626 to 642 (SSSSSNSTSNEASGTSS) are enriched in low complexity. 10 consecutive C2H2-type zinc fingers follow at residues 651–673 (FICSICGRTLPKLYSLRIHMLKH), 679–701 (HACQVCGKTFIYKHGLKLHQSLH), 707–729 (FQCELCVKSFVTKRSLQEHMSIH), 735–757 (YLCSVCGKSFHRGSGLSKHFKKH), 766–788 (YHCTQCEKSFFEARDLRQHMNKH), 794–816 (FQCQFCDKCYSWKKDWYSHVKSH), 822–846 (YRCNICGKEFYEKALFRRHVKKATH), 858–880 (RVCEKCGRKFTQLREYRRHMNNH), 886–908 (FECLTCGVAWADARSLKRHVRTH), and 914–937 (YVCPVCSEAYIDARTLRKHMTKFH). A Glycyl lysine isopeptide (Lys-Gly) (interchain with G-Cter in SUMO2) cross-link involves residue Lys-1043. Ser-1050 bears the Phosphoserine mark.

It is found in the nucleus. The protein resides in the nucleolus. Functionally, may be involved in transcriptional regulation. The sequence is that of Zinc finger and BTB domain-containing protein 11 from Homo sapiens (Human).